A 143-amino-acid chain; its full sequence is Small ribosomal subunit protein uS11c (143 aa).

The protein belongs to the universal ribosomal protein uS11 family. As to quaternary structure, part of the 30S ribosomal subunit.

Its subcellular location is the plastid. It localises to the chloroplast. The protein is Small ribosomal subunit protein uS11c of Oryza nivara (Indian wild rice).